The chain runs to 721 residues: Procollagen-lysine,2-oxoglutarate 5-dioxygenase (721 aa).

The signal sequence occupies residues 1-21 (MRIQQSALLLLLLAVTSQGDA). N-linked (GlcNAc...) asparagine glycosylation is found at asparagine 504, asparagine 530, and asparagine 536. The Fe2OG dioxygenase domain occupies 627–721 (NPPRALMNFM…RYIMISFIDP (95 aa)). 2 residues coordinate Fe cation: histidine 650 and aspartate 652. Asparagine 680 carries an N-linked (GlcNAc...) asparagine glycan. Histidine 702 contributes to the Fe cation binding site. A glycan (N-linked (GlcNAc...) asparagine) is linked at asparagine 709. 2-oxoglutarate is bound at residue arginine 712.

The cofactor is L-ascorbate. It depends on Fe(2+) as a cofactor.

It is found in the endoplasmic reticulum. The protein resides in the secreted. The protein localises to the extracellular space. It catalyses the reaction L-lysyl-[collagen] + 2-oxoglutarate + O2 = (5R)-5-hydroxy-L-lysyl-[collagen] + succinate + CO2. In terms of biological role, forms hydroxylysine residues in collagen type IV. Required for the secretion of collagen type IV (vkg) from haemocytes, fat body and follicle cells. In Drosophila melanogaster (Fruit fly), this protein is Procollagen-lysine,2-oxoglutarate 5-dioxygenase.